The chain runs to 394 residues: MAETQGKVITCKAAVVWGPKVPLVIQEICVDPPQKMEVRVKILYSSICHTDLGCWNGTNEAERAFPRILGHEAVGIVESVGEGVKDVKEGDYVIPTFNGECGECKVCKREESNLCERYHVDPMKRVMVNDGGTRFSTTINKDGGSSQSQPIYHFLNTSTFTEYTVLDSACVVKIDPNSPLKQMSLLSCGVSTGVGAAWNIANVKEGKSTAVFGLGSVGLAVAEGARARGASRIIGVDANASKFEKGKLMGVTDFINPKDLTKPVHQMIREITGGGVDYSFECTGNVDVLREAFLSTHVGWGSTVLVGIYPTPRTLPLHPMELFDGRRITGSVFGGFKPKSQLPNFAQQCMKGVVKLEPFITNELPFEKINDAFQLLRDGKSLRCILQISKLLKR.

Zn(2+)-binding residues include Cys-48, Thr-50, His-71, Cys-101, Cys-104, Cys-107, Cys-115, and Cys-188. Thr-50 and His-71 together coordinate an alcohol. Thr-50 lines the NAD(+) pocket. Residues Gly-213 to Gly-218, Asp-237, Lys-242, Thr-283, Val-306, Val-306 to Ile-308, Phe-333, and Arg-383 contribute to the NAD(+) site.

It belongs to the zinc-containing alcohol dehydrogenase family. Class-III subfamily. In terms of assembly, homodimer. Zn(2+) is required as a cofactor.

Its subcellular location is the cytoplasm. It catalyses the reaction a primary alcohol + NAD(+) = an aldehyde + NADH + H(+). The enzyme catalyses a secondary alcohol + NAD(+) = a ketone + NADH + H(+). In Arabidopsis thaliana (Mouse-ear cress), this protein is Alcohol dehydrogenase-like 3.